Reading from the N-terminus, the 352-residue chain is tRNA-specific 2-thiouridylase MnmA (352 aa).

ATP is bound by residues 9–16 and Met35; that span reads ALSGGVDS. Catalysis depends on Cys96, which acts as the Nucleophile. Cys96 and Cys192 form a disulfide bridge. Gly120 is an ATP binding site. Positions 142–144 are interaction with tRNA; that stretch reads KDQ. Cys192 functions as the Cysteine persulfide intermediate in the catalytic mechanism. Residues 299 to 300 form an interaction with tRNA region; that stretch reads RY.

This sequence belongs to the MnmA/TRMU family.

The protein resides in the cytoplasm. It catalyses the reaction S-sulfanyl-L-cysteinyl-[protein] + uridine(34) in tRNA + AH2 + ATP = 2-thiouridine(34) in tRNA + L-cysteinyl-[protein] + A + AMP + diphosphate + H(+). Its function is as follows. Catalyzes the 2-thiolation of uridine at the wobble position (U34) of tRNA, leading to the formation of s(2)U34. The chain is tRNA-specific 2-thiouridylase MnmA from Acidithiobacillus ferrooxidans (strain ATCC 23270 / DSM 14882 / CIP 104768 / NCIMB 8455) (Ferrobacillus ferrooxidans (strain ATCC 23270)).